A 1005-amino-acid polypeptide reads, in one-letter code: PH and SEC7 domain-containing protein 4 (1005 aa).

The segment at 27–66 (YPSEIHGHPGPSEPCQEHTCPFDPPESARPDAPHGNSGVE) is disordered. A phosphoserine mark is found at serine 85, serine 88, and serine 97. Disordered regions lie at residues 145–189 (PSKD…PGSS), 287–386 (LALG…NRGE), 407–525 (TSLL…SSSR), and 694–714 (EEDA…KISS). Over residues 161–177 (EEDEDSGDDSSGPEEEN) the composition is skewed to acidic residues. A compositionally biased stretch (low complexity) spans 350–361 (SQTSQSLSDLTQ). 2 positions are modified to phosphoserine: serine 381 and serine 435. Positions 428–438 (PVSSQDSSPRV) are enriched in low complexity. 2 stretches are compositionally biased toward basic and acidic residues: residues 453 to 465 (LQKD…SLKE) and 476 to 488 (QEAE…RSED). Residues 493 to 686 (QHHVHLASAE…KALYWSIRSE (194 aa)) enclose the SEC7 domain. In terms of domain architecture, PH spans 726 to 841 (PTYKQGILAR…WIARINLAAA (116 aa)). Residues 870–926 (SSLEEQHRSHENCLDAASDDLLDLQRNLPERRGRSRELEEYRLRKEYLEHEKTRYET) are a coiled coil. The interval 951 to 1005 (KETDGSQEPRPSLKKSHSSPSLHQEEAPTTAKVKRNISERRTYRKIIPKRNRNQL) is disordered. A phosphoserine mark is found at serine 968 and serine 971. The segment covering 992–1005 (TYRKIIPKRNRNQL) has biased composition (basic residues).

The protein localises to the cell membrane. It localises to the cell projection. It is found in the ruffle membrane. In terms of biological role, guanine nucleotide exchange factor for ARF6 and ARL14/ARF7. Through ARL14 activation, controls the movement of MHC class II-containing vesicles along the actin cytoskeleton in dendritic cells. Involved in membrane recycling. Interacts with several phosphatidylinositol phosphate species, including phosphatidylinositol 3,4-bisphosphate, phosphatidylinositol 3,5-bisphosphate and phosphatidylinositol 4,5-bisphosphate. This is PH and SEC7 domain-containing protein 4 (Psd4) from Mus musculus (Mouse).